A 184-amino-acid chain; its full sequence is Isopentenyl-diphosphate Delta-isomerase (184 aa).

Positions 25 and 32 each coordinate Mn(2+). In terms of domain architecture, Nudix hydrolase spans 30–164; the sequence is PLHLAFSCWL…PWAFSPWMVL (135 aa). The active site involves Cys67. His69 contacts Mn(2+). Mg(2+) is bound at residue Glu87. Mn(2+)-binding residues include Glu114 and Glu116. Glu116 is an active-site residue.

Belongs to the IPP isomerase type 1 family. As to quaternary structure, homodimer. Requires Mg(2+) as cofactor. Mn(2+) is required as a cofactor.

It is found in the cytoplasm. The enzyme catalyses isopentenyl diphosphate = dimethylallyl diphosphate. It participates in isoprenoid biosynthesis; dimethylallyl diphosphate biosynthesis; dimethylallyl diphosphate from isopentenyl diphosphate: step 1/1. Its function is as follows. Catalyzes the 1,3-allylic rearrangement of the homoallylic substrate isopentenyl (IPP) to its highly electrophilic allylic isomer, dimethylallyl diphosphate (DMAPP). The chain is Isopentenyl-diphosphate Delta-isomerase from Klebsiella pneumoniae subsp. pneumoniae (strain ATCC 700721 / MGH 78578).